A 229-amino-acid polypeptide reads, in one-letter code: Enolase-phosphatase E1 (229 aa).

It belongs to the HAD-like hydrolase superfamily. MasA/MtnC family. In terms of assembly, monomer. The cofactor is Mg(2+).

The enzyme catalyses 5-methylsulfanyl-2,3-dioxopentyl phosphate + H2O = 1,2-dihydroxy-5-(methylsulfanyl)pent-1-en-3-one + phosphate. It participates in amino-acid biosynthesis; L-methionine biosynthesis via salvage pathway; L-methionine from S-methyl-5-thio-alpha-D-ribose 1-phosphate: step 3/6. Its pathway is amino-acid biosynthesis; L-methionine biosynthesis via salvage pathway; L-methionine from S-methyl-5-thio-alpha-D-ribose 1-phosphate: step 4/6. Bifunctional enzyme that catalyzes the enolization of 2,3-diketo-5-methylthiopentyl-1-phosphate (DK-MTP-1-P) into the intermediate 2-hydroxy-3-keto-5-methylthiopentenyl-1-phosphate (HK-MTPenyl-1-P), which is then dephosphorylated to form the acireductone 1,2-dihydroxy-3-keto-5-methylthiopentene (DHK-MTPene). This Serratia proteamaculans (strain 568) protein is Enolase-phosphatase E1.